Consider the following 299-residue polypeptide: Homoserine O-acetyltransferase (299 aa).

Cys142 acts as the Acyl-thioester intermediate in catalysis. Substrate is bound by residues Lys163 and Ser192. His235 acts as the Proton acceptor in catalysis. Glu237 is a catalytic residue. Arg249 is a binding site for substrate.

Belongs to the MetA family.

Its subcellular location is the cytoplasm. The enzyme catalyses L-homoserine + acetyl-CoA = O-acetyl-L-homoserine + CoA. Its pathway is amino-acid biosynthesis; L-methionine biosynthesis via de novo pathway; O-acetyl-L-homoserine from L-homoserine: step 1/1. Transfers an acetyl group from acetyl-CoA to L-homoserine, forming acetyl-L-homoserine. The sequence is that of Homoserine O-acetyltransferase from Synechococcus sp. (strain ATCC 27144 / PCC 6301 / SAUG 1402/1) (Anacystis nidulans).